The sequence spans 292 residues: GTP cyclohydrolase FolE2 (292 aa).

Belongs to the GTP cyclohydrolase IV family.

It catalyses the reaction GTP + H2O = 7,8-dihydroneopterin 3'-triphosphate + formate + H(+). It participates in cofactor biosynthesis; 7,8-dihydroneopterin triphosphate biosynthesis; 7,8-dihydroneopterin triphosphate from GTP: step 1/1. Its function is as follows. Converts GTP to 7,8-dihydroneopterin triphosphate. The chain is GTP cyclohydrolase FolE2 from Staphylococcus aureus (strain Mu50 / ATCC 700699).